The sequence spans 205 residues: Tegument protein UL51 homolog (205 aa).

C4 is lipidated: S-palmitoyl cysteine; by host.

Belongs to the herpesviridae UL51 family. As to quaternary structure, oligomerizes. Interacts with U75; this interaction mediates U75 incorporation to virions. Phosphorylated. Post-translationally, palmitoylation is necessary for Golgi localization.

It is found in the virion tegument. The protein resides in the host cytoplasm. The protein localises to the host Golgi apparatus. In terms of biological role, plays several roles during the time course of infection, including egress of virus particles from the perinuclear space and secondary envelopment of cytoplasmic capsids that bud into specific trans-Golgi network (TGN)-derived membranes. This Homo sapiens (Human) protein is Tegument protein UL51 homolog (U44).